We begin with the raw amino-acid sequence, 329 residues long: Adenylate isopentenyltransferase (329 aa).

Residues 37–44, Lys63, Thr74, 129–131, 220–222, and Lys313 contribute to the ATP site; these read GATGTGKS, SNS, and KAI.

Belongs to the IPP transferase family. Requires Mg(2+) as cofactor. Expressed in roots, stems, leaves and cones.

The enzyme catalyses dimethylallyl diphosphate + AMP = N(6)-(dimethylallyl)adenosine 5'-phosphate + diphosphate. It carries out the reaction dimethylallyl diphosphate + ADP = N(6)-(dimethylallyl)adenosine 5'-diphosphate + diphosphate. The catalysed reaction is dimethylallyl diphosphate + ATP = N(6)-(dimethylallyl)adenosine 5'-triphosphate + diphosphate. Its function is as follows. Involved in cytokinin biosynthesis. Catalyzes the transfer of an isopentenyl group from dimethylallyl diphosphate (DMAPP) to ATP, ADP and AMP. GMP, IMP, CMP or UMP are not used as substrates. The polypeptide is Adenylate isopentenyltransferase (Humulus lupulus (European hop)).